We begin with the raw amino-acid sequence, 528 residues long: Na(+)/H(+) antiporter NhaB (528 aa).

11 consecutive transmembrane segments (helical) span residues 10 to 30 (IGNFLGNSPKWYKIAILSFLI), 63 to 83 (YPLQPGGLLAIEAVAIGMTSA), 96 to 116 (VLLLLVFMVAGIYFMKQLLLF), 131 to 165 (VSLMFCLTSAFLSAFLDALTVIAVIIAVAVGFYAI), 204 to 224 (LLMHAGVGTALGGVCTMVGEP), 240 to 260 (FVIRMSPVTVPVLIAGILTCL), 305 to 325 (VLVGVWLIAGLALHLASVGLV), 359 to 379 (LAVFFAVVAVIIDQHLFAPVI), 391 to 411 (LVIFYIANGLLSMVSDNVFVG), 449 to 469 (ATPNGQAAFLFLLTSALAPLI), and 476 to 496 (MVWMALPYTIVLSVVGVLAIE).

The protein belongs to the NhaB Na(+)/H(+) (TC 2.A.34) antiporter family.

It is found in the cell inner membrane. The enzyme catalyses 2 Na(+)(in) + 3 H(+)(out) = 2 Na(+)(out) + 3 H(+)(in). Na(+)/H(+) antiporter that extrudes sodium in exchange for external protons. The polypeptide is Na(+)/H(+) antiporter NhaB (Shewanella putrefaciens (strain CN-32 / ATCC BAA-453)).